Here is a 485-residue protein sequence, read N- to C-terminus: Glycogen synthase (485 aa).

An ADP-alpha-D-glucose-binding site is contributed by Lys15.

It belongs to the glycosyltransferase 1 family. Bacterial/plant glycogen synthase subfamily.

It carries out the reaction [(1-&gt;4)-alpha-D-glucosyl](n) + ADP-alpha-D-glucose = [(1-&gt;4)-alpha-D-glucosyl](n+1) + ADP + H(+). Its pathway is glycan biosynthesis; glycogen biosynthesis. Its function is as follows. Synthesizes alpha-1,4-glucan chains using ADP-glucose. The chain is Glycogen synthase from Rhodospirillum rubrum (strain ATCC 11170 / ATH 1.1.1 / DSM 467 / LMG 4362 / NCIMB 8255 / S1).